A 146-amino-acid polypeptide reads, in one-letter code: Outer envelope pore protein 16, chloroplastic (146 aa).

The contains 4 beta strands stretch occupies residues 1 to 73; sequence MPRSSFSGSL…EKSLKKMCKE (73 aa). The next 3 helical transmembrane spans lie at 75–91, 103–119, and 128–146; these read AYWGAIAGVYVGMEYGV, AMFGGAVTGALVSAASN, and DAITGAAIATAAEFINYLT.

Belongs to the Tim17/Tim22/Tim23 family. Plastid outer envelope porin OEP16 (TC 1.B.30) subfamily. As to quaternary structure, homodimer and oligomers in membrane.

It localises to the plastid. The protein localises to the chloroplast outer membrane. It is found in the etioplast membrane. Its function is as follows. Voltage-dependent high-conductance channel with a slight cation-selectivity; selective for amino acids but excludes triosephosphates or uncharged sugars. Non-essential amino acid-selective channel protein and translocation pore for NADPH:protochlorophyllide oxidoreductase A (PORA) and possibly PORB. The protein is Outer envelope pore protein 16, chloroplastic (OEP16) of Pisum sativum (Garden pea).